The primary structure comprises 668 residues: Probable serine/threonine-protein kinase abkB (668 aa).

Disordered regions lie at residues 88-111 and 132-162; these read YTNIGGTSPNRQSVPENSTTKTTA and EVEEEIIDKNERGKEQEQENKQQKEQKDDNK. Residues 91-105 show a composition bias toward polar residues; that stretch reads IGGTSPNRQSVPENS. A coiled-coil region spans residues 131-163; sequence KEVEEEIIDKNERGKEQEQENKQQKEQKDDNKS. Over residues 138-162 the composition is skewed to basic and acidic residues; the sequence is IDKNERGKEQEQENKQQKEQKDDNK. Residues 314–668 form the Protein kinase domain; that stretch reads DFERLPINSA…EIPSTYHHHH (355 aa). ATP contacts are provided by residues 320–328 and lysine 346; that span reads INSASLAQV. Aspartate 478 functions as the Proton acceptor in the catalytic mechanism.

The protein belongs to the protein kinase superfamily. ADCK protein kinase family.

The protein is Probable serine/threonine-protein kinase abkB (abkB) of Dictyostelium discoideum (Social amoeba).